The sequence spans 1086 residues: DNA polymerase (1086 aa).

Positions 638–657 (STTRKPVDDVEEHSECNGFT) are disordered.

Belongs to the DNA polymerase type-B family.

The catalysed reaction is DNA(n) + a 2'-deoxyribonucleoside 5'-triphosphate = DNA(n+1) + diphosphate. Its function is as follows. Replicates the viral genome. Host DNA polymerases cannot substitute for the viral enzyme in this process. The polypeptide is DNA polymerase (Noctuidae (owlet moths)).